A 66-amino-acid polypeptide reads, in one-letter code: Large ribosomal subunit protein bL33c (66 aa).

This sequence belongs to the bacterial ribosomal protein bL33 family.

It localises to the plastid. Its subcellular location is the chloroplast. This is Large ribosomal subunit protein bL33c from Lobularia maritima (Sweet alyssum).